Here is a 145-residue protein sequence, read N- to C-terminus: Large ribosomal subunit protein uL14m (145 aa).

The N-terminal 30 residues, 1-30, are a transit peptide targeting the mitochondrion; sequence MAFSSGLWGPCVHMSRAFSQRCFSTTGSLG.

This sequence belongs to the universal ribosomal protein uL14 family. As to quaternary structure, component of the mitochondrial ribosome large subunit (39S) which comprises a 16S rRNA and about 50 distinct proteins. Interacts with MALSU1.

It localises to the mitochondrion. In terms of biological role, may form part of 2 intersubunit bridges in the assembled ribosome. Upon binding to MALSU1, intersubunit bridge formation is blocked, preventing ribosome formation and repressing translation. The polypeptide is Large ribosomal subunit protein uL14m (MRPL14) (Bos taurus (Bovine)).